The sequence spans 106 residues: uncharacterized protein (106 aa).

The disordered stretch occupies residues 54 to 106 (RSTLVATSPRRRSLVQQRRPPLREQNGGSGSSCVSSGGSASTVKTPGSRRASK). Residues 84-94 (SSCVSSGGSAS) are compositionally biased toward low complexity.

This is an uncharacterized protein from Human adenovirus C serotype 2 (HAdV-2).